A 320-amino-acid polypeptide reads, in one-letter code: Cell division protein FtsQ (320 aa).

Positions 1-24 are disordered; that stretch reads MAQTIKRGGKGVRRATAARSAQRK. The Cytoplasmic portion of the chain corresponds to 1 to 52; that stretch reads MAQTIKRGGKGVRRATAARSAQRKVQTARQQTGSVLDSVLRWLPFSEETLHR. Residues 53-73 traverse the membrane as a helical segment; it reads ILMTLILAAAAGLVWTVAVMA. At 74–320 the chain is on the periplasmic side; it reads GIPALVSEQA…RAASAKSDEG (247 aa). The POTRA domain maps to 92-160; sequence FKVSHLEVRG…DTLVIDIVER (69 aa). The disordered stretch occupies residues 296–320; the sequence is AAEKRAEEQARAEAKRAASAKSDEG.

This sequence belongs to the FtsQ/DivIB family. FtsQ subfamily.

The protein resides in the cell inner membrane. Essential cell division protein. In Novosphingobium aromaticivorans (strain ATCC 700278 / DSM 12444 / CCUG 56034 / CIP 105152 / NBRC 16084 / F199), this protein is Cell division protein FtsQ.